The sequence spans 743 residues: NAD(P)H-quinone oxidoreductase subunit 5, chloroplastic (743 aa).

The next 16 membrane-spanning stretches (helical) occupy residues 9-29 (WIIP…LLFF), 40-60 (WAFI…DLSI), 89-109 (IDPL…LVLI), 125-145 (FAYM…SNFI), 147-167 (IYIF…FWFT), 185-205 (GDFG…SFEF), 219-239 (NEVN…GPVA), 258-278 (TPIS…FLVA), 280-300 (LLPL…IGII), 327-347 (LGYM…FHLI), 354-374 (ALLF…VGYF), 396-416 (TAFL…CFWS), 425-445 (WLYS…TAFY), 546-566 (ILFV…IGIP), 607-627 (LSVS…KPFY), and 721-741 (FYLL…FFFF).

Belongs to the complex I subunit 5 family. In terms of assembly, NDH is composed of at least 16 different subunits, 5 of which are encoded in the nucleus.

It localises to the plastid. The protein resides in the chloroplast thylakoid membrane. The catalysed reaction is a plastoquinone + NADH + (n+1) H(+)(in) = a plastoquinol + NAD(+) + n H(+)(out). It catalyses the reaction a plastoquinone + NADPH + (n+1) H(+)(in) = a plastoquinol + NADP(+) + n H(+)(out). In terms of biological role, NDH shuttles electrons from NAD(P)H:plastoquinone, via FMN and iron-sulfur (Fe-S) centers, to quinones in the photosynthetic chain and possibly in a chloroplast respiratory chain. The immediate electron acceptor for the enzyme in this species is believed to be plastoquinone. Couples the redox reaction to proton translocation, and thus conserves the redox energy in a proton gradient. This is NAD(P)H-quinone oxidoreductase subunit 5, chloroplastic (ndhF) from Citrus sinensis (Sweet orange).